The following is a 755-amino-acid chain: Metabotropic glutamate receptor-like protein B (755 aa).

The N-terminal stretch at 1–23 is a signal peptide; sequence MKNLISIILLILIFFNYSKFVKS. 3 N-linked (GlcNAc...) asparagine glycosylation sites follow: Asn-16, Asn-183, and Asn-273. Residues 24-385 are Extracellular-facing; sequence KNCKIAVLLS…VDYSSSMKLG (362 aa). Residues 386 to 406 form a helical membrane-spanning segment; sequence ITITSSICIFLCIISIIIVLV. The Cytoplasmic portion of the chain corresponds to 407–417; it reads FRTARIIKSAS. Residues 418–438 traverse the membrane as a helical segment; it reads PAFLFLILMGCILIFIGCIIF. Residues 439–455 are Extracellular-facing; it reads SQSPNEGTCRARVWLLS. A helical transmembrane segment spans residues 456 to 476; that stretch reads IGYTIFLGSLLVKNWRIWLLF. The Cytoplasmic segment spans residues 477–492; it reads DNPKLKKRSITNWKLY. Residues 493-513 form a helical membrane-spanning segment; the sequence is PWVAGILAADVLILAFWQGLG. Over 514-541 the chain is Extracellular; the sequence is NIRSESRIGIDSLTKYQYTNVCSSNDQG. The helical transmembrane segment at 542 to 562 threads the bilayer; that stretch reads SIALYILLVFHGIKLLVACFI. At 563–578 the chain is on the cytoplasmic side; the sequence is SFKIKVVDIDEFNESK. A helical transmembrane segment spans residues 579-599; that stretch reads PIASSVYIITFCLFIVIPLMV. The Extracellular segment spans residues 600–607; that stretch reads SPQSVTSQ. A helical membrane pass occupies residues 608 to 628; the sequence is VTTICVCAIVTTLISIILLFG. The Cytoplasmic portion of the chain corresponds to 629-755; the sequence is SKFYKMITQG…GEVEIDSNNL (127 aa). 2 disordered regions span residues 656-676 and 691-729; these read QSLEKKKTGEEDDSESSEENG and FSSDTEDDENETQQIDEEKDEQIAGSNEDIIQPEENIEE. Positions 694 to 710 are enriched in acidic residues; it reads DTEDDENETQQIDEEKD.

In the N-terminal section; belongs to the BMP lipoprotein family. This sequence in the C-terminal section; belongs to the G-protein coupled receptor 3 family. GABA-B receptor subfamily.

The protein localises to the membrane. The protein is Metabotropic glutamate receptor-like protein B (grlB) of Dictyostelium discoideum (Social amoeba).